The chain runs to 144 residues: Large ribosomal subunit protein uL15 (144 aa).

The disordered stretch occupies residues 1–58 (MNLSNLRAPRKANEKKKRVGRGMGSGMGKTSARGHKGQRSRSGSRMMRGFEGGQMPLH). Over residues 8–20 (APRKANEKKKRVG) the composition is skewed to basic residues. Over residues 40 to 49 (SRSGSRMMRG) the composition is skewed to low complexity.

It belongs to the universal ribosomal protein uL15 family. In terms of assembly, part of the 50S ribosomal subunit.

Its function is as follows. Binds to the 23S rRNA. This chain is Large ribosomal subunit protein uL15, found in Koribacter versatilis (strain Ellin345).